Here is a 119-residue protein sequence, read N- to C-terminus: MSQIDKASRRQKIKDRSRAAVAGTAVKPRLCIYRSLSQIYAQLIDDSGSTTILAVSSMSKENKELKGAGVEVCRTVGRQLGEKAMAKGITTVVFDRNGFRYHGRVKALADGAREAGLIF.

Belongs to the universal ribosomal protein uL18 family. As to quaternary structure, part of the 50S ribosomal subunit; part of the 5S rRNA/L5/L18/L25 subcomplex. Contacts the 5S and 23S rRNAs.

This is one of the proteins that bind and probably mediate the attachment of the 5S RNA into the large ribosomal subunit, where it forms part of the central protuberance. This chain is Large ribosomal subunit protein uL18, found in Chlorobium phaeovibrioides (strain DSM 265 / 1930) (Prosthecochloris vibrioformis (strain DSM 265)).